Here is a 239-residue protein sequence, read N- to C-terminus: MTANADFYEATYAVPMHCTDCTDDIKKCLNGITGIKDLQFDISQQMMSVNSCVAPSVIINALRDCGRDAIIRGAGKPNSSAVAILETFEDVDLKKDTAVRGLARIVQVSDQKTLFDVTVNGVPFSGKYQAKIHSNGNISEGVKSTGDVYYKFEEPIECSDASDLDKSLYSGQNFVSAPLPIWDLIGRSFVIFREGEPAYDIAGVIARSAGVWENDKQVCACTGKTVWEERKDALKNNIK.

Residues 7-70 (FYEATYAVPM…ALRDCGRDAI (64 aa)) enclose the HMA domain. Residues C18 and C21 each contribute to the Cu cation site. A disulfide bridge links C28 with C65. Residue D163 participates in Zn(2+) binding. Cu cation-binding residues include C219 and C221.

Belongs to the CCS1 family. Requires Cu(2+) as cofactor.

It localises to the cytoplasm. In terms of biological role, copper chaperone for superoxide dismutase 1 (SOD1). Binds copper ions and delivers them specifically to SOD1. This chain is Superoxide dismutase 1 copper chaperone (CCS1), found in Candida glabrata (strain ATCC 2001 / BCRC 20586 / JCM 3761 / NBRC 0622 / NRRL Y-65 / CBS 138) (Yeast).